The sequence spans 1059 residues: IQ motif-containing protein H (1059 aa).

Positions 6–35 (KNKDEVGNILVKVQDDLRQLKKNIVQFTVQ) form a coiled coil. Residues 245 to 267 (MESAESRLLRAPPPSAASASSDN) form a disordered region. Residues 401 to 430 (HQAAAVRIQTCWRRYSARTAYLIRLRSKWA) form the IQ domain.

This Danio rerio (Zebrafish) protein is IQ motif-containing protein H (iqch).